The primary structure comprises 244 residues: Probable 2-phosphosulfolactate phosphatase (244 aa).

The protein belongs to the ComB family. Mg(2+) is required as a cofactor.

The catalysed reaction is (2R)-O-phospho-3-sulfolactate + H2O = (2R)-3-sulfolactate + phosphate. The protein is Probable 2-phosphosulfolactate phosphatase of Cyanothece sp. (strain PCC 7425 / ATCC 29141).